The primary structure comprises 30 residues: Cyclotide psyleio E (30 aa).

Residues Ser1–Lys30 constitute a cross-link (cyclopeptide (Ser-Lys)). 3 cysteine pairs are disulfide-bonded: Cys7–Cys21, Cys11–Cys23, and Cys16–Cys28.

This is a cyclic peptide.

Probably participates in a plant defense mechanism. The chain is Cyclotide psyleio E from Psychotria leiocarpa.